The following is a 575-amino-acid chain: DNA mismatch repair protein MutL (575 aa).

It belongs to the DNA mismatch repair MutL/HexB family.

This protein is involved in the repair of mismatches in DNA. It is required for dam-dependent methyl-directed DNA mismatch repair. May act as a 'molecular matchmaker', a protein that promotes the formation of a stable complex between two or more DNA-binding proteins in an ATP-dependent manner without itself being part of a final effector complex. This chain is DNA mismatch repair protein MutL, found in Dictyoglomus thermophilum (strain ATCC 35947 / DSM 3960 / H-6-12).